Here is a 624-residue protein sequence, read N- to C-terminus: Translocator protein BipB (624 aa).

A disordered region spans residues 54-99 (LASEQCDAQPVTDDARLDRLDDKPALRAPRSDAAHAADGNARGNGG). The span at 66–88 (DDARLDRLDDKPALRAPRSDAAH) shows a compositional bias: basic and acidic residues. Residues 313–343 (EMQAKREAELQKKSDEYQEQVKKAEEMQKTM) adopt a coiled-coil conformation. 3 helical membrane-spanning segments follow: residues 359-379 (FAAA…GLAL), 405-425 (AILK…LVAC), and 434-454 (LAGA…AAFV).

Belongs to the SctE/SipB/YopB family.

It is found in the secreted. The protein resides in the host membrane. In terms of biological role, plays a role in the bacterium-induced formation of multinucleated giant cell (MNGC), which is formed after host cell fusion, as well as in the intercellular spreading of bacteria and in the induction of apoptosis in macrophages. May act in concert with other effector proteins to induce fusion of host cell membranes. This Burkholderia thailandensis (strain ATCC 700388 / DSM 13276 / CCUG 48851 / CIP 106301 / E264) protein is Translocator protein BipB (bipB).